The sequence spans 279 residues: DegV domain-containing protein SA1258 (279 aa).

The DegV domain maps to 4–278 (QIIVTDSTSD…QGAIGLVVLK (275 aa)). 2 residues coordinate hexadecanoate: threonine 61 and serine 93.

May bind long-chain fatty acids, such as palmitate, and may play a role in lipid transport or fatty acid metabolism. The chain is DegV domain-containing protein SA1258 from Staphylococcus aureus (strain N315).